The chain runs to 404 residues: D-galactonate dehydratase family member Ent638_1932 (404 aa).

Residues asparagine 37 and histidine 122 each coordinate substrate. Tyrosine 159 serves as the catalytic Proton donor/acceptor. Aspartate 212 provides a ligand contact to Mg(2+). The Proton donor/acceptor role is filled by histidine 214. Mg(2+)-binding residues include glutamate 238 and glutamate 264. The substrate site is built by glutamate 264, arginine 285, histidine 314, aspartate 318, and glutamate 341.

Belongs to the mandelate racemase/muconate lactonizing enzyme family. GalD subfamily. Requires Mg(2+) as cofactor.

It carries out the reaction D-mannonate = 2-dehydro-3-deoxy-D-gluconate + H2O. Has low D-mannonate dehydratase activity (in vitro), suggesting that this is not a physiological substrate and that it has no significant role in D-mannonate degradation in vivo. Has no detectable activity with a panel of 70 other acid sugars (in vitro). In Enterobacter sp. (strain 638), this protein is D-galactonate dehydratase family member Ent638_1932.